The sequence spans 296 residues: Glycine--tRNA ligase alpha subunit (296 aa).

It belongs to the class-II aminoacyl-tRNA synthetase family. Tetramer of two alpha and two beta subunits.

The protein resides in the cytoplasm. It catalyses the reaction tRNA(Gly) + glycine + ATP = glycyl-tRNA(Gly) + AMP + diphosphate. This chain is Glycine--tRNA ligase alpha subunit, found in Parasynechococcus marenigrum (strain WH8102).